A 184-amino-acid polypeptide reads, in one-letter code: GTP cyclohydrolase 1 (184 aa).

Zn(2+) contacts are provided by C75, H78, and C146.

The protein belongs to the GTP cyclohydrolase I family. In terms of assembly, homomer.

The enzyme catalyses GTP + H2O = 7,8-dihydroneopterin 3'-triphosphate + formate + H(+). It participates in cofactor biosynthesis; 7,8-dihydroneopterin triphosphate biosynthesis; 7,8-dihydroneopterin triphosphate from GTP: step 1/1. This Teredinibacter turnerae (strain ATCC 39867 / T7901) protein is GTP cyclohydrolase 1.